The chain runs to 244 residues: Thiol S-methyltransferase TMT1B (244 aa).

Positions 1–23 (MDALVLFLQLLVLLLTLPLHLLA) are cleaved as a signal peptide.

Belongs to the methyltransferase superfamily.

It is found in the endoplasmic reticulum membrane. Its subcellular location is the lipid droplet. The protein resides in the microsome. The protein localises to the cytoplasm. It localises to the cytosol. The catalysed reaction is a thiol + S-adenosyl-L-methionine = a methyl thioether + S-adenosyl-L-homocysteine + H(+). Thiol S-methyltransferase that catalyzes the transfer of a methyl group from S-adenosyl-L-methionine to alkyl and phenolic thiol-containing acceptor substrates. Together with TMT1B accounts for most of S-thiol methylation activity in the endoplasmic reticulum of hepatocytes. Selectively methylates S-centered nucleophiles from metabolites such as hydrogen sulfide and dithiothreitol. This Mus musculus (Mouse) protein is Thiol S-methyltransferase TMT1B.